A 304-amino-acid chain; its full sequence is MSRSQNLRHNVINQVIDDMARGHIPSPLPSQSALAEMYNISRTTVRHILSHLRECGVLTQVGNDYVIARKPDHDDGFACTTASMSEQNKVFEQAFFTMINQRQLRPGETFSELQLARAAGVSPVVVREYLLKFGRYNLIHSEKRGQWSMKQFDQSYAEQLFELREMLETHSLQHFLNLPDHDPRWLQAKTMLERHRLLRDNIGNSFRMFSQLDRDFHSLLLSAADNIFFDQSLEIISVIFHFHYQWDESDLKQRNIIAVDEHMTILSALICRSDLDATLALRNHLNSAKQSMIRSINENTRYAH.

In terms of domain architecture, HTH gntR-type spans 1 to 70 (MSRSQNLRHN…VGNDYVIARK (70 aa)). A DNA-binding region (H-T-H motif) is located at residues 31-50 (QSALAEMYNISRTTVRHILS).

Functionally, may be a positive transcriptional regulator for lgoD and/or lgoT. Is essential for growth on L-galactonate as the sole carbon source. The sequence is that of Probable HTH-type transcriptional regulator LgoR (lgoR) from Escherichia coli (strain K12).